We begin with the raw amino-acid sequence, 828 residues long: Periplasmic nitrate reductase (828 aa).

Residues 1 to 32 (MNLSRRDFMKTNAAVAAAAVAGLAIPVKNVEA) constitute a signal peptide (tat-type signal). Residues 38–94 (IKWDKAPCRFCGTGCSVLVGTQNGRVVASQGDPDADVNRGLNCIKGYFLPKIMYGKD) form the 4Fe-4S Mo/W bis-MGD-type domain. Positions 45, 48, 52, and 80 each coordinate [4Fe-4S] cluster. Mo-bis(molybdopterin guanine dinucleotide) contacts are provided by residues lysine 82, glutamine 149, asparagine 174, cysteine 178, 211–218 (WGSNMAEM), 242–246 (STFEH), 261–263 (QSD), methionine 372, glutamine 376, asparagine 482, 508–509 (SD), lysine 531, aspartate 558, and 718–727 (TGRVLEHWHT). A substrate-binding site is contributed by phenylalanine 794. Positions 802 and 819 each coordinate Mo-bis(molybdopterin guanine dinucleotide).

Belongs to the prokaryotic molybdopterin-containing oxidoreductase family. NasA/NapA/NarB subfamily. As to quaternary structure, component of the periplasmic nitrate reductase NapAB complex composed of NapA and NapB. The cofactor is [4Fe-4S] cluster. Mo-bis(molybdopterin guanine dinucleotide) is required as a cofactor. In terms of processing, predicted to be exported by the Tat system. The position of the signal peptide cleavage has not been experimentally proven.

It localises to the periplasm. It carries out the reaction 2 Fe(II)-[cytochrome] + nitrate + 2 H(+) = 2 Fe(III)-[cytochrome] + nitrite + H2O. Functionally, catalytic subunit of the periplasmic nitrate reductase complex NapAB. Receives electrons from NapB and catalyzes the reduction of nitrate to nitrite. The polypeptide is Periplasmic nitrate reductase (Pasteurella multocida (strain Pm70)).